Here is a 430-residue protein sequence, read N- to C-terminus: tRNA(Ile)-lysidine synthase (430 aa).

Position 21–26 (Ser-21–Ser-26) interacts with ATP.

The protein belongs to the tRNA(Ile)-lysidine synthase family.

It is found in the cytoplasm. It catalyses the reaction cytidine(34) in tRNA(Ile2) + L-lysine + ATP = lysidine(34) in tRNA(Ile2) + AMP + diphosphate + H(+). Ligates lysine onto the cytidine present at position 34 of the AUA codon-specific tRNA(Ile) that contains the anticodon CAU, in an ATP-dependent manner. Cytidine is converted to lysidine, thus changing the amino acid specificity of the tRNA from methionine to isoleucine. In Salmonella newport (strain SL254), this protein is tRNA(Ile)-lysidine synthase.